The sequence spans 574 residues: MNSSLTVQRRGSDAELGPWVMAARSKDAALSQRDGVLPVKVEEDSPGSWEPSYPAAWPDPETSRLHFRQLRYQEVAGPEEALSRLRELCRRWLRPELLSKEQILELLVLEQFLTILPEELQAWVREHCPESGEEAVAVVRALQRALDGTSPQGMVTFEDMAVSLTWEEWERLDPARRDFCRESAQKDSGSTVPPSLESRVENKELIPMQQILEEVEPQGQLQEAFQGKHPLFSKCGSTHEDRVEKQSGNPLPLKLENSAEAEGLNSISDVNKNGSIEGEDSKNNELQNSARCSNLVLCQHIPKAERPTDGEEHGNKCKQSFHMVAWHVLKPHKSDSGDSFHHSSFFETQRQLHEERPYKCGNCGKSFKQRSDLFRHQRIHTGEKPYGCQECGKSFSQSAALTKHQRTHTGEKPYTCLKCGERFRQNSHLNRHQSTHSRDKHFKCEECGETCRISNLFRHQRLHKGERPYKCEECKKSFKQRSDLFKHHRIHTGEKPYGCSVCGKRFNQSATLIKHQRIHTGEKPYKCLECGERFRQSTHLIRHQRIHQNKMLSVGRGAHACNPSPLGGQGRRII.

S12 carries the phosphoserine modification. K40 participates in a covalent cross-link: Glycyl lysine isopeptide (Lys-Gly) (interchain with G-Cter in SUMO2). The SCAN box domain occupies 64–146; it reads RLHFRQLRYQ…AVVRALQRAL (83 aa). Residues 155 to 230 enclose the KRAB domain; that stretch reads VTFEDMAVSL…LQEAFQGKHP (76 aa). The tract at residues 182–202 is disordered; that stretch reads ESAQKDSGSTVPPSLESRVEN. Glycyl lysine isopeptide (Lys-Gly) (interchain with G-Cter in SUMO2) cross-links involve residues K203, K228, and K254. Positions 231–284 are disordered; sequence LFSKCGSTHEDRVEKQSGNPLPLKLENSAEAEGLNSISDVNKNGSIEGEDSKNN. Over residues 265–274 the composition is skewed to polar residues; that stretch reads NSISDVNKNG. A Glycyl lysine isopeptide (Lys-Gly) (interchain with G-Cter in SUMO2) cross-link involves residue K282. C2H2-type zinc fingers lie at residues 358 to 380, 386 to 408, 414 to 436, 442 to 463, 469 to 491, 497 to 519, and 525 to 547; these read YKCG…QRIH, YGCQ…QRTH, YTCL…QSTH, FKCE…QRLH, YKCE…HRIH, YGCS…QRIH, and YKCL…QRIH. A Glycyl lysine isopeptide (Lys-Gly) (interchain with G-Cter in SUMO2) cross-link involves residue K443.

It belongs to the krueppel C2H2-type zinc-finger protein family.

It localises to the nucleus. Functionally, may be involved in transcriptional regulation. The protein is Zinc finger protein 394 (ZNF394) of Pongo abelii (Sumatran orangutan).